The following is a 239-amino-acid chain: Proteasome activator complex subunit 2 (239 aa).

A2 is modified (N-acetylalanine). S10 bears the Phosphoserine mark.

It belongs to the PA28 family. As to quaternary structure, heterodimer of PSME1 and PSME2, which forms a hexameric ring.

Its function is as follows. Implicated in immunoproteasome assembly and required for efficient antigen processing. The PA28 activator complex enhances the generation of class I binding peptides by altering the cleavage pattern of the proteasome. In Homo sapiens (Human), this protein is Proteasome activator complex subunit 2 (PSME2).